We begin with the raw amino-acid sequence, 337 residues long: Low-density lipoprotein receptor class A domain-containing protein 3 (337 aa).

The first 13 residues, 1–13 (MWLLYLILGSVES), serve as a signal peptide directing secretion. The Extracellular segment spans residues 14–169 (QLLPGNNHTT…NQLLYYPSIT (156 aa)). Asparagine 20 carries an N-linked (GlcNAc...) asparagine glycan. LDL-receptor class A domains are found at residues 24–61 (ECNI…KECP), 66–103 (RCGP…ENCT), and 108–144 (LCSN…EHCH). 9 cysteine pairs are disulfide-bonded: cysteine 25/cysteine 38, cysteine 33/cysteine 51, cysteine 45/cysteine 60, cysteine 67/cysteine 80, cysteine 74/cysteine 93, cysteine 87/cysteine 102, cysteine 109/cysteine 121, cysteine 116/cysteine 134, and cysteine 128/cysteine 143. Asparagine 101 carries an N-linked (GlcNAc...) asparagine glycan. Residues 170–190 (YTIIGSSVIFVLVVALLALVL) form a helical membrane-spanning segment. At 191-337 (HHQRKRNLMS…DDLPSTEVDV (147 aa)) the chain is on the cytoplasmic side. The segment covering 243-253 (QQPVSVESPPS) has biased composition (polar residues). The disordered stretch occupies residues 243–337 (QQPVSVESPP…DDLPSTEVDV (95 aa)). Positions 291–303 (RSRTGSSASAGST) are enriched in low complexity.

Belongs to the LDLR family.

The protein resides in the cell membrane. In Xenopus tropicalis (Western clawed frog), this protein is Low-density lipoprotein receptor class A domain-containing protein 3.